The sequence spans 421 residues: Phaseolin, beta-type (421 aa).

A signal peptide spans 1-24 (MMRARVPLLLLGILFLASLSASFA). The Cupin type-1 domain occupies 237-390 (KSLSKQDNTI…TFSGSGDEVM (154 aa)). Residues asparagine 252 and asparagine 341 are each glycosylated (N-linked (GlcNAc...) asparagine).

Belongs to the 7S seed storage protein family. Homotrimer that associates to form a dodecamer.

Its subcellular location is the vacuole. It localises to the aleurone grain. Major seed storage protein. The protein is Phaseolin, beta-type of Phaseolus vulgaris (Kidney bean).